The following is a 421-amino-acid chain: Zinc finger protein 584 (421 aa).

Residues 17–88 enclose the KRAB domain; it reads VMFEDVTVYF…SWVDVTPVSR (72 aa). Basic and acidic residues predominate over residues 120-129; the sequence is QHQDTHSEGK. The interval 120 to 146 is disordered; the sequence is QHQDTHSEGKPRRHTEHGAAFPPGSSC. C2H2-type zinc fingers lie at residues 159 to 181, 214 to 236, 242 to 264, 270 to 292, 298 to 320, 326 to 348, 354 to 376, and 382 to 404; these read FKCS…LITH, HVCN…QKVH, FKCS…QRIH, YECS…RKVH, YECT…QRVH, FECK…WKVH, YECS…QQFH, and YECT…KKVH. A disordered region spans residues 402-421; it reads KVHTPERRQEDRAHGKVVSC. The segment covering 404–415 has biased composition (basic and acidic residues); that stretch reads HTPERRQEDRAH.

Belongs to the krueppel C2H2-type zinc-finger protein family.

The protein resides in the nucleus. May be involved in transcriptional regulation. The polypeptide is Zinc finger protein 584 (ZNF584) (Homo sapiens (Human)).